A 440-amino-acid polypeptide reads, in one-letter code: Calcium/calmodulin-regulated receptor-like kinase 1 (440 aa).

A helical membrane pass occupies residues 8–28; the sequence is LIVGISLGLVIGVVLAISALF. A calmodulin binding region spans residues 28–228; it reads FCFRYHRKKS…ARGLEYLHDG (201 aa). The Protein kinase domain occupies 113–380; it reads CNFTTLIGQG…DIVQVLTRVI (268 aa). Residues 119-127 and Lys141 each bind ATP; that span reads IGQGAFGPV. Residue Tyr186 is modified to Phosphotyrosine. Catalysis depends on Asp237, which acts as the Proton acceptor. The residue at position 241 (Ser241) is a Phosphoserine. Thr274 bears the Phosphothreonine mark. Tyr282 is subject to Phosphotyrosine. A calmodulin binding region spans residues 369 to 440; the sequence is MRDIVQVLTR…DSSIAEDVIL (72 aa). The disordered stretch occupies residues 386–427; sequence RKRQKNSPSPSPRLPPPPPIVEESEGELTANGSLRSEIHRRD. The span at 394 to 405 shows a compositional bias: pro residues; sequence SPSPRLPPPPPI.

It belongs to the protein kinase superfamily. Ser/Thr protein kinase family. As to quaternary structure, interacts with calmodulin (CaM) in a calcium- (Ca(2+)-) dependent manner. Binds to MEKK1. Similar transcript expression levels in seedlings, roots, leaves, stems and flowers, and lower levels in siliques, but protein accumulates mostly in 7-day-old seedlings, old roots and young leaves and, to a lower extent, in young roots, old leaves, flowers and siliques (at protein level).

It localises to the cell membrane. The protein resides in the endosome membrane. It carries out the reaction L-seryl-[protein] + ATP = O-phospho-L-seryl-[protein] + ADP + H(+). It catalyses the reaction L-threonyl-[protein] + ATP = O-phospho-L-threonyl-[protein] + ADP + H(+). Kinase activity is stimulated by calcium/calmodulin, but blocked by chlorpromazine. Its function is as follows. Required for cold tolerance, via the activation of MAP kinases activity. Phosphorylates and activates MEKK1 in response to cold in a calcium-dependent manner. The chain is Calcium/calmodulin-regulated receptor-like kinase 1 from Arabidopsis thaliana (Mouse-ear cress).